The sequence spans 103 residues: Large ribosomal subunit protein bL21 (103 aa).

The protein belongs to the bacterial ribosomal protein bL21 family. As to quaternary structure, part of the 50S ribosomal subunit. Contacts protein L20.

In terms of biological role, this protein binds to 23S rRNA in the presence of protein L20. This is Large ribosomal subunit protein bL21 from Vibrio cholerae serotype O1 (strain ATCC 39541 / Classical Ogawa 395 / O395).